The primary structure comprises 312 residues: uncharacterized protein (312 aa).

The next 10 helical transmembrane spans lie at 13–33, 45–65, 81–101, 105–125, 133–153, 162–182, 198–218, 229–249, 260–280, and 283–303; these read AAGT…SIWI, AVLL…FLIY, ACGA…IGLN, AMVE…FTAC, IQDL…LGGW, MIGA…LVLS, GMTA…AAGM, MYGL…VLML, AAAI…LFLG, and LGLI…GMEY. In terms of domain architecture, EamA spans 173 to 303; the sequence is AVYAGYLVLS…VFFVITGMEY (131 aa).

The protein belongs to the EamA transporter family.

The protein resides in the cell membrane. This is an uncharacterized protein from Bacillus subtilis (strain 168).